A 115-amino-acid polypeptide reads, in one-letter code: Toxin CSTX-9 (115 aa).

The signal sequence occupies residues 1-20 (MKVLVICAVLFLAIFSNSSA). The propeptide occupies 21 to 47 (ETEDDFLEDESFEADDVIPFLAREQVR). 4 cysteine pairs are disulfide-bonded: Cys-53/Cys-68, Cys-60/Cys-77, Cys-67/Cys-95, and Cys-79/Cys-93.

It belongs to the neurotoxin 19 (CSTX) family. Monomer. Interacts with CSTX-13 (AC P83919) (Kd=370 nM), but does not interact with CSTX-1 (AC P81694). In terms of tissue distribution, expressed by the venom gland.

It localises to the secreted. The protein resides in the target cell membrane. Functionally, synergistic toxin that induces or increases a cytolytic effect when combined with CSTX-1 (AC P81694) or CSTX-13 (AC P83919). Potassium ions and M-ctenitoxin-Cs1a (AC P83619) have also an effect on its activity. When alone, has no insecticidal activity. This chain is Toxin CSTX-9, found in Cupiennius salei (American wandering spider).